We begin with the raw amino-acid sequence, 249 residues long: Triosephosphate isomerase (249 aa).

Residue 9–11 (NWK) coordinates substrate. Residue His-95 is the Electrophile of the active site. Catalysis depends on Glu-165, which acts as the Proton acceptor. Residues Gly-171, Ser-211, and 232 to 233 (GG) each bind substrate.

The protein belongs to the triosephosphate isomerase family. Homodimer.

The protein resides in the cytoplasm. It carries out the reaction D-glyceraldehyde 3-phosphate = dihydroxyacetone phosphate. It functions in the pathway carbohydrate biosynthesis; gluconeogenesis. It participates in carbohydrate degradation; glycolysis; D-glyceraldehyde 3-phosphate from glycerone phosphate: step 1/1. Its function is as follows. Involved in the gluconeogenesis. Catalyzes stereospecifically the conversion of dihydroxyacetone phosphate (DHAP) to D-glyceraldehyde-3-phosphate (G3P). The sequence is that of Triosephosphate isomerase from Chlorobium phaeobacteroides (strain DSM 266 / SMG 266 / 2430).